We begin with the raw amino-acid sequence, 335 residues long: 2-acylglycerol O-acyltransferase 1 (335 aa).

2 consecutive transmembrane segments (helical) span residues 18-38 (TVAVLQWVLKYLLLGPMSIGI) and 40-60 (VMLIIHNYLFLYIPYLMWLYF). N-linked (GlcNAc...) asparagine glycosylation is found at N121 and N125. A helical transmembrane segment spans residues 132–152 (LFPGFTSYLHVLPLWFWCPVF). A glycan (N-linked (GlcNAc...) asparagine) is linked at N180.

The protein belongs to the diacylglycerol acyltransferase family. As to expression, expressed in stomach and liver.

Its subcellular location is the endoplasmic reticulum membrane. The catalysed reaction is a 2-acylglycerol + an acyl-CoA = a 1,2-diacylglycerol + CoA. The enzyme catalyses 2-(9Z-octadecenoyl)-glycerol + butanoyl-CoA = 1-butanoyl-2-(9Z-octadecenoyl)-glycerol + CoA. It carries out the reaction 2-(9Z-octadecenoyl)-glycerol + octanoyl-CoA = 1-octanoyl-2-(9Z-octadecenoyl)-glycerol + CoA. It catalyses the reaction 2-(9Z-octadecenoyl)-glycerol + dodecanoyl-CoA = 1-dodecanoyl-2-(9Z-octadecenoyl)-glycerol + CoA. The catalysed reaction is 2-(9Z-octadecenoyl)-glycerol + tetradecanoyl-CoA = 1-tetradecanoyl-2-(9Z-octadecenoyl)-glycerol + CoA. The enzyme catalyses 2-(9Z-octadecenoyl)-glycerol + hexadecanoyl-CoA = 1-hexadecanoyl-2-(9Z-octadecenoyl)-glycerol + CoA. It carries out the reaction 2-(9Z-octadecenoyl)-glycerol + octadecanoyl-CoA = 1-octadecanoyl-2-(9Z-octadecenoyl)-glycerol + CoA. It catalyses the reaction eicosanoyl-CoA + 2-(9Z-octadecenoyl)-glycerol = 1-eicosanoyl-2-(9Z-octadecenoyl)-glycerol + CoA. The catalysed reaction is 2-(9Z-octadecenoyl)-glycerol + (9Z)-octadecenoyl-CoA = 1,2-di-(9Z-octadecenoyl)-glycerol + CoA. The enzyme catalyses 2-(9Z-octadecenoyl)-glycerol + (9Z,12Z)-octadecadienoyl-CoA = 1-(9Z,12Z-octadecadienoyl)-2-(9Z-octadecenoyl)-glycerol + CoA. It carries out the reaction 2-(9Z-octadecenoyl)-glycerol + (5Z,8Z,11Z,14Z)-eicosatetraenoyl-CoA = 1-(5Z,8Z,11Z,14Z-eicosatetraenoyl)-2-(9Z-octadecenoyl)-glycerol + CoA. It catalyses the reaction a 2-acylglycerol + an acyl-CoA = a 1,2-diacyl-sn-glycerol + CoA. The catalysed reaction is a 2-acylglycerol + an acyl-CoA = a 2,3-diacyl-sn-glycerol + CoA. The enzyme catalyses a 1-acylglycerol + an acyl-CoA = a 1,2-diacylglycerol + CoA. It carries out the reaction 1-dodecanoylglycerol + (9Z)-octadecenoyl-CoA = 1-dodecanoyl-2-(9Z-octadecenoyl)-glycerol + CoA. It catalyses the reaction 1-tetradecanoylglycerol + (9Z)-octadecenoyl-CoA = 1-tetradecanoyl-2-(9Z-octadecenoyl)-glycerol + CoA. The catalysed reaction is 1-hexadecanoylglycerol + (9Z)-octadecenoyl-CoA = 1-hexadecanoyl-2-(9Z-octadecenoyl)-glycerol + CoA. The enzyme catalyses 1-(9Z-octadecenoyl)-glycerol + (9Z)-octadecenoyl-CoA = 1,2-di-(9Z-octadecenoyl)-glycerol + CoA. It carries out the reaction 1-(9Z,12Z-octadecadienoyl)-glycerol + (9Z)-octadecenoyl-CoA = 1-(9Z,12Z-octadecadienoyl)-2-(9Z-octadecenoyl)-glycerol + CoA. It catalyses the reaction 1-(9Z,12Z,15Z-octadecatrienoyl)-glycerol + (9Z)-octadecenoyl-CoA = 1-(9Z,12Z,15Z-octadecatrienoyl)-2-(9Z-octadecenoyl)-glycerol + CoA. The catalysed reaction is 1-(5Z,8Z,11Z,14Z-eicosatetraenoyl)-glycerol + (9Z)-octadecenoyl-CoA = 1-(5Z,8Z,11Z,14Z-eicosatetraenoyl)-2-(9Z-octadecenoyl)-glycerol + CoA. The enzyme catalyses a 1-acylglycerol + an acyl-CoA = a 1,3-diacylglycerol + CoA. It carries out the reaction 1-dodecanoylglycerol + (9Z)-octadecenoyl-CoA = 1-dodecanoyl-3-(9Z-octadecenoyl)-glycerol + CoA. It catalyses the reaction 1-hexadecanoylglycerol + (9Z)-octadecenoyl-CoA = 1-(9Z-octadecenoyl)-3-hexadecanoylglycerol + CoA. The catalysed reaction is 1-octadecanoylglycerol + (9Z)-octadecenoyl-CoA = 1-octadecanoyl-3-(9Z-octadecenoyl)-glycerol + CoA. The enzyme catalyses 1-(9Z-octadecenoyl)-sn-glycerol + (9Z)-octadecenoyl-CoA = 1,3-di-(9Z-octadecenoyl)-glycerol + CoA. It carries out the reaction 1-(9Z,12Z-octadecadienoyl)-glycerol + (9Z)-octadecenoyl-CoA = 1-(9Z-octadecenoyl)-3-(9Z,12Z-octadecadienoyl)-glycerol + CoA. It catalyses the reaction 1-(9Z,12Z,15Z-octadecatrienoyl)-glycerol + (9Z)-octadecenoyl-CoA = 1-(9Z,12Z,15Z-octadecatrienoyl)-3-(9Z-octadecenoyl)-glycerol + CoA. The catalysed reaction is a 1-acyl-sn-glycerol + an acyl-CoA = a 1,3-diacyl-sn-glycerol + CoA. The enzyme catalyses a 3-acyl-sn-glycerol + an acyl-CoA = a 1,3-diacyl-sn-glycerol + CoA. It carries out the reaction 3-octadecanoyl-sn-glycerol + (9Z)-octadecenoyl-CoA = 1-(9Z-octadecenoyl)-3-octadecanoyl-sn-glycerol + CoA. It functions in the pathway glycerolipid metabolism; triacylglycerol biosynthesis. Involved in glycerolipid synthesis and lipid metabolism. Catalyzes the formation of diacylglycerol, the precursor of triacylglycerol, by transferring the acyl chain of a fatty acyl-CoA to a monoacylglycerol, mainly at the sn-1 or sn-3 positions. It uses both sn-2-monoacylglycerol (2-acylglycerol) and sn-1-monoacylglycerol (1-acyl-sn-glycerol) equally well as substrates, and uses sn-3-monoacylglycerol (3-acyl-sn-glycerol) with lower efficiency. Probably not involved in absorption of dietary fat in the small intestine. The chain is 2-acylglycerol O-acyltransferase 1 from Homo sapiens (Human).